A 294-amino-acid chain; its full sequence is Universal stress protein MSMEG_3950/MSMEI_3859 (294 aa).

Residue Gly13 coordinates ATP. Lys109 is covalently cross-linked (Isoglutamyl lysine isopeptide (Lys-Gln) (interchain with Q-Cter in protein Pup)). ATP contacts are provided by residues 117-123, 131-132, Gly164, Asp197, 261-267, and 275-277; these read GNRGMGA, ST, GSHGRGG, and SVS.

It belongs to the universal stress protein A family.

The polypeptide is Universal stress protein MSMEG_3950/MSMEI_3859 (Mycolicibacterium smegmatis (strain ATCC 700084 / mc(2)155) (Mycobacterium smegmatis)).